Consider the following 117-residue polypeptide: Gamma-aminobutyric acid receptor-associated protein-like 3 (117 aa).

An interaction with beta-tubulin region spans residues 1 to 22 (MKFQYKEVHPFEYRKKEGEKIR). The segment at 36 to 68 (APKARVPDLDRRKYLVPSDLTDGQFYLLIRKRI) is interaction with GABRG2. G116 carries Phosphatidylethanolamine amidated glycine lipidation. A propeptide (removed in mature form) is located at residue K117.

The protein belongs to the ATG8 family. As to quaternary structure, interacts with GABRG2 and beta-tubulin. Post-translationally, the precursor molecule is cleaved by ATG4B to form the cytosolic form, GABARAPL3-I. This is activated by APG7L/ATG7, transferred to ATG3 and conjugated to phospholipid to form the membrane-bound form, GABARAPL3-II. ATG4B also mediates the delipidation required for GABARAPL1 recycling when autophagosomes fuse with lysosomes. In terms of tissue distribution, ubiquitous. Expressed at very high levels in the brain, heart, peripheral blood leukocytes, liver, kidney, placenta and skeletal muscle. Expressed at very low levels in thymus and small intestine.

The protein resides in the cytoplasm. It is found in the cytoskeleton. Its subcellular location is the cytoplasmic vesicle. The protein localises to the autophagosome membrane. Ubiquitin-like modifier involved in autophagosome formation. Whereas LC3s are involved in elongation of the phagophore membrane, the GABARAP/GATE-16 subfamily is essential for a later stage in autophagosome maturation. The chain is Gamma-aminobutyric acid receptor-associated protein-like 3 (GABARAPL3) from Homo sapiens (Human).